Consider the following 376-residue polypeptide: Actin-like protein 53D (376 aa).

Residues 1–40 form a necessary and sufficient for recruitment to the fusome and actin cones of spermatocyte cysts region; sequence MSSEVDSNSHHAAVVIDNGSGVCKAGFSPEDTPRAVFPSI.

The protein belongs to the actin family. ARP1 subfamily. In terms of tissue distribution, high expression in males whereas expression in females is very low. In adult males, highest levels of expression are in the testis. In adult females, expressed only in the ovaries at very low levels. In larvae, highly expressed in the imaginal disk whereas in prepupae and pupae modest levels of expression occur in the fat body.

It is found in the cytoplasm. It localises to the cytoskeleton. Its function is as follows. Required for optimal embryo development, particularly under heat stress conditions. Also appears to have a role in negatively regulating spermatocyte cyst development. Under heat stress conditions, required for the correct organization and migration of nuclei during early embryogenesis, and therefore possibly functions by regulating embryonic actin networks during the heat stress response. The sequence is that of Actin-like protein 53D from Drosophila melanogaster (Fruit fly).